A 312-amino-acid polypeptide reads, in one-letter code: Acetaldehyde dehydrogenase (312 aa).

NAD(+) is bound at residue 12-15 (SGNI). The active-site Acyl-thioester intermediate is the C132. NAD(+)-binding positions include 163–171 (SAGPGTRAN) and N290.

The protein belongs to the acetaldehyde dehydrogenase family. Heterotetramer composed of two DmpG (aldolase) and two DmpF (dehydrogenase) subunits, which allows a direct channeling of acetaldehyde between the two active sites.

The enzyme catalyses acetaldehyde + NAD(+) + CoA = acetyl-CoA + NADH + H(+). It participates in aromatic compound metabolism; phenol degradation. Its activity is regulated as follows. Is not activated by Mn(2+), Mg(2+), Ca(2+), Zn(2+) or Co(2+). Catalyzes the conversion of acetaldehyde to acetyl-CoA, using NAD(+) and coenzyme A. Can also act on propanal and butanal to form propanoyl-CoA and butanoyl-CoA, respectively. Is the final enzyme in the meta-cleavage pathway for the degradation of aromatic compounds such as phenols, cresols and catechols. NADP(+) can replace NAD(+) but the rate of reaction is much slower. This chain is Acetaldehyde dehydrogenase (dmpF), found in Pseudomonas sp. (strain CF600).